Consider the following 540-residue polypeptide: Chaperonin GroEL (540 aa).

ATP contacts are provided by residues 30-33 (TLGP), K51, 87-91 (DGTTT), G415, and D495.

Belongs to the chaperonin (HSP60) family. Forms a cylinder of 14 subunits composed of two heptameric rings stacked back-to-back. Interacts with the co-chaperonin GroES.

It localises to the cytoplasm. It carries out the reaction ATP + H2O + a folded polypeptide = ADP + phosphate + an unfolded polypeptide.. Together with its co-chaperonin GroES, plays an essential role in assisting protein folding. The GroEL-GroES system forms a nano-cage that allows encapsulation of the non-native substrate proteins and provides a physical environment optimized to promote and accelerate protein folding. The sequence is that of Chaperonin GroEL from Rhodothermus marinus (Rhodothermus obamensis).